The following is a 168-amino-acid chain: ATP synthase subunit b (168 aa).

Residues 9-29 traverse the membrane as a helical segment; the sequence is SIPFGTIAYTLFIFLLLLVML.

The protein belongs to the ATPase B chain family. As to quaternary structure, F-type ATPases have 2 components, F(1) - the catalytic core - and F(0) - the membrane proton channel. F(1) has five subunits: alpha(3), beta(3), gamma(1), delta(1), epsilon(1). F(0) has three main subunits: a(1), b(2) and c(10-14). The alpha and beta chains form an alternating ring which encloses part of the gamma chain. F(1) is attached to F(0) by a central stalk formed by the gamma and epsilon chains, while a peripheral stalk is formed by the delta and b chains.

Its subcellular location is the cell membrane. Its function is as follows. F(1)F(0) ATP synthase produces ATP from ADP in the presence of a proton or sodium gradient. F-type ATPases consist of two structural domains, F(1) containing the extramembraneous catalytic core and F(0) containing the membrane proton channel, linked together by a central stalk and a peripheral stalk. During catalysis, ATP synthesis in the catalytic domain of F(1) is coupled via a rotary mechanism of the central stalk subunits to proton translocation. Component of the F(0) channel, it forms part of the peripheral stalk, linking F(1) to F(0). The sequence is that of ATP synthase subunit b from Bacillus cereus (strain B4264).